A 165-amino-acid polypeptide reads, in one-letter code: Phosphopantetheine adenylyltransferase (165 aa).

S10 lines the substrate pocket. ATP contacts are provided by residues S10–F11 and H18. 3 residues coordinate substrate: K42, T79, and R93. ATP contacts are provided by residues G94–R96, E104, and V129–T135.

It belongs to the bacterial CoaD family. In terms of assembly, homohexamer. It depends on Mg(2+) as a cofactor.

Its subcellular location is the cytoplasm. It carries out the reaction (R)-4'-phosphopantetheine + ATP + H(+) = 3'-dephospho-CoA + diphosphate. The protein operates within cofactor biosynthesis; coenzyme A biosynthesis; CoA from (R)-pantothenate: step 4/5. Its function is as follows. Reversibly transfers an adenylyl group from ATP to 4'-phosphopantetheine, yielding dephospho-CoA (dPCoA) and pyrophosphate. This Rhodopseudomonas palustris (strain BisB5) protein is Phosphopantetheine adenylyltransferase.